A 1065-amino-acid polypeptide reads, in one-letter code: Carbamoyl phosphate synthase large chain (1065 aa).

Positions 1 to 401 (MPKRRDIETI…SLLKAVRSLE (401 aa)) are carboxyphosphate synthetic domain. Positions 129, 169, 175, 176, 208, 210, 215, 241, 242, 243, 284, and 298 each coordinate ATP. The ATP-grasp 1 domain maps to 133 to 327 (RALMNELGEP…IAKLAAKIAV (195 aa)). Mg(2+) is bound by residues glutamine 284, glutamate 298, and asparagine 300. Residues glutamine 284, glutamate 298, and asparagine 300 each contribute to the Mn(2+) site. The segment at 402 to 546 (IGVHHLELNE…YSTYEEENES (145 aa)) is oligomerization domain. The carbamoyl phosphate synthetic domain stretch occupies residues 547–929 (IVTEKPSVIV…ALYKGLVASG (383 aa)). The region spanning 671-861 (EQALSELGIP…MANLATKAIL (191 aa)) is the ATP-grasp 2 domain. ATP-binding residues include arginine 707, arginine 746, isoleucine 748, glutamate 752, glycine 777, valine 778, histidine 779, serine 780, glutamine 820, and glutamate 832. Residues glutamine 820, glutamate 832, and asparagine 834 each contribute to the Mg(2+) site. The Mn(2+) site is built by glutamine 820, glutamate 832, and asparagine 834. The region spanning 930–1065 (IHIQPHGAVL…TAMTEGLVRS (136 aa)) is the MGS-like domain. Residues 930–1065 (IHIQPHGAVL…TAMTEGLVRS (136 aa)) form an allosteric domain region.

It belongs to the CarB family. In terms of assembly, composed of two chains; the small (or glutamine) chain promotes the hydrolysis of glutamine to ammonia, which is used by the large (or ammonia) chain to synthesize carbamoyl phosphate. Tetramer of heterodimers (alpha,beta)4. Mg(2+) is required as a cofactor. Requires Mn(2+) as cofactor.

It catalyses the reaction hydrogencarbonate + L-glutamine + 2 ATP + H2O = carbamoyl phosphate + L-glutamate + 2 ADP + phosphate + 2 H(+). The catalysed reaction is hydrogencarbonate + NH4(+) + 2 ATP = carbamoyl phosphate + 2 ADP + phosphate + 2 H(+). The protein operates within amino-acid biosynthesis; L-arginine biosynthesis; carbamoyl phosphate from bicarbonate: step 1/1. It participates in pyrimidine metabolism; UMP biosynthesis via de novo pathway; (S)-dihydroorotate from bicarbonate: step 1/3. Large subunit of the glutamine-dependent carbamoyl phosphate synthetase (CPSase). CPSase catalyzes the formation of carbamoyl phosphate from the ammonia moiety of glutamine, carbonate, and phosphate donated by ATP, constituting the first step of 2 biosynthetic pathways, one leading to arginine and/or urea and the other to pyrimidine nucleotides. The large subunit (synthetase) binds the substrates ammonia (free or transferred from glutamine from the small subunit), hydrogencarbonate and ATP and carries out an ATP-coupled ligase reaction, activating hydrogencarbonate by forming carboxy phosphate which reacts with ammonia to form carbamoyl phosphate. In Bacillus caldolyticus, this protein is Carbamoyl phosphate synthase large chain.